Reading from the N-terminus, the 308-residue chain is MNHFLDIHKTDAADLRAMIDQAGAMKQARLGRPKAAPDDEQPLKDRMVALIFEKPSTRTRVSFDVGVRQMGGQTMVLSGNDMQLGHGETIADTARVLSRYVDMIMIRTFDESVLAEMAEYADVPVINGLTDRSHPCQIMADVLTYEEHRGPIAGKKVVWTGDGNNVCSSFLHAAGQFGFDLTFSGPAQFDPEEEYMGFARQKGSKIVIERDAVKAVEGADLVVADTWVSMHDAQSAKERRHNLLRPYQVNAELMRHAKPDALFMHCLPAHREEEATSEVMDGPHSVIFDEAENRLHAQKAIMRWCLGA.

Carbamoyl phosphate contacts are provided by residues 56 to 59 (STRT), Gln-83, Arg-107, and 134 to 137 (HPCQ). L-ornithine contacts are provided by residues Asn-165, Asp-225, and 229–230 (SM). Residues 266–267 (CL) and Arg-294 each bind carbamoyl phosphate.

This sequence belongs to the aspartate/ornithine carbamoyltransferase superfamily. OTCase family.

The protein localises to the cytoplasm. It catalyses the reaction carbamoyl phosphate + L-ornithine = L-citrulline + phosphate + H(+). It functions in the pathway amino-acid biosynthesis; L-arginine biosynthesis; L-arginine from L-ornithine and carbamoyl phosphate: step 1/3. Functionally, reversibly catalyzes the transfer of the carbamoyl group from carbamoyl phosphate (CP) to the N(epsilon) atom of ornithine (ORN) to produce L-citrulline. The protein is Ornithine carbamoyltransferase of Ruegeria pomeroyi (strain ATCC 700808 / DSM 15171 / DSS-3) (Silicibacter pomeroyi).